Consider the following 380-residue polypeptide: L-lactate dehydrogenase (380 aa).

An FMN hydroxy acid dehydrogenase domain is found at 1–380 (MIISSTTDFR…DRSILAKTDR (380 aa)). Tyr-24 is a substrate binding site. Positions 106 and 127 each coordinate FMN. Tyr-129 contributes to the substrate binding site. Thr-155 is an FMN binding site. Arg-164 provides a ligand contact to substrate. Lys-251 lines the FMN pocket. Catalysis depends on His-275, which acts as the Proton acceptor. Residue Arg-278 coordinates substrate. 306 to 330 (DGGVRSGLDVVRMLALGAKGVLLGR) lines the FMN pocket.

It belongs to the FMN-dependent alpha-hydroxy acid dehydrogenase family. FMN is required as a cofactor.

Its subcellular location is the cell inner membrane. It catalyses the reaction (S)-lactate + A = pyruvate + AH2. Catalyzes the conversion of L-lactate to pyruvate. Is coupled to the respiratory chain. The sequence is that of L-lactate dehydrogenase from Caulobacter sp. (strain K31).